The chain runs to 258 residues: MLAKRIIPCLDVRDGQVVKGVQFRNHEIIGDIVPLAKRYAEEGADELVFYDITASSDGRVVDKSWVSRVAEVIDIPFCVAGGIKSLDDAAKILSFGADKISINSPALADPTLITRLADRFGVQCIVVGIDTWYDAETGKYHVNQYTGDESRTRVTQWETLEWVQEVQKRGAGEIVLNMMNQDGVRNGYDLEQLKKVREVCHVPLIASGGAGTMEHFLEAFRDADVDGALAASVFHKQIINIGELKAYLATQGVEIRIC.

Catalysis depends on residues D11 and D130.

The protein belongs to the HisA/HisF family. As to quaternary structure, heterodimer of HisH and HisF.

The protein localises to the cytoplasm. It carries out the reaction 5-[(5-phospho-1-deoxy-D-ribulos-1-ylimino)methylamino]-1-(5-phospho-beta-D-ribosyl)imidazole-4-carboxamide + L-glutamine = D-erythro-1-(imidazol-4-yl)glycerol 3-phosphate + 5-amino-1-(5-phospho-beta-D-ribosyl)imidazole-4-carboxamide + L-glutamate + H(+). It participates in amino-acid biosynthesis; L-histidine biosynthesis; L-histidine from 5-phospho-alpha-D-ribose 1-diphosphate: step 5/9. In terms of biological role, IGPS catalyzes the conversion of PRFAR and glutamine to IGP, AICAR and glutamate. The HisF subunit catalyzes the cyclization activity that produces IGP and AICAR from PRFAR using the ammonia provided by the HisH subunit. This chain is Imidazole glycerol phosphate synthase subunit HisF, found in Escherichia fergusonii (strain ATCC 35469 / DSM 13698 / CCUG 18766 / IAM 14443 / JCM 21226 / LMG 7866 / NBRC 102419 / NCTC 12128 / CDC 0568-73).